The primary structure comprises 201 residues: NADH-quinone oxidoreductase subunit C (201 aa).

This sequence belongs to the complex I 30 kDa subunit family. In terms of assembly, NDH-1 is composed of 14 different subunits. Subunits NuoB, C, D, E, F, and G constitute the peripheral sector of the complex.

It is found in the cell inner membrane. It carries out the reaction a quinone + NADH + 5 H(+)(in) = a quinol + NAD(+) + 4 H(+)(out). Its function is as follows. NDH-1 shuttles electrons from NADH, via FMN and iron-sulfur (Fe-S) centers, to quinones in the respiratory chain. The immediate electron acceptor for the enzyme in this species is believed to be ubiquinone. Couples the redox reaction to proton translocation (for every two electrons transferred, four hydrogen ions are translocated across the cytoplasmic membrane), and thus conserves the redox energy in a proton gradient. The polypeptide is NADH-quinone oxidoreductase subunit C (Ruegeria sp. (strain TM1040) (Silicibacter sp.)).